The primary structure comprises 555 residues: Urocanate hydratase (555 aa).

NAD(+) is bound by residues 52–53 (GG), glutamine 130, 176–178 (GMG), glutamate 196, arginine 201, 242–243 (NA), 263–267 (QTSAH), 273–274 (YL), and tyrosine 322. Cysteine 410 is an active-site residue. Glycine 492 contacts NAD(+).

This sequence belongs to the urocanase family. The cofactor is NAD(+).

The protein resides in the cytoplasm. It catalyses the reaction 4-imidazolone-5-propanoate = trans-urocanate + H2O. It participates in amino-acid degradation; L-histidine degradation into L-glutamate; N-formimidoyl-L-glutamate from L-histidine: step 2/3. Its function is as follows. Catalyzes the conversion of urocanate to 4-imidazolone-5-propionate. This Shewanella putrefaciens (strain CN-32 / ATCC BAA-453) protein is Urocanate hydratase.